Consider the following 229-residue polypeptide: Deoxyribose-phosphate aldolase (229 aa).

Aspartate 84 acts as the Proton donor/acceptor in catalysis. The active-site Schiff-base intermediate with acetaldehyde is the lysine 146. The active-site Proton donor/acceptor is the lysine 188.

This sequence belongs to the DeoC/FbaB aldolase family. DeoC type 1 subfamily.

The protein localises to the cytoplasm. It catalyses the reaction 2-deoxy-D-ribose 5-phosphate = D-glyceraldehyde 3-phosphate + acetaldehyde. The protein operates within carbohydrate degradation; 2-deoxy-D-ribose 1-phosphate degradation; D-glyceraldehyde 3-phosphate and acetaldehyde from 2-deoxy-alpha-D-ribose 1-phosphate: step 2/2. Functionally, catalyzes a reversible aldol reaction between acetaldehyde and D-glyceraldehyde 3-phosphate to generate 2-deoxy-D-ribose 5-phosphate. The protein is Deoxyribose-phosphate aldolase of Pyrobaculum neutrophilum (strain DSM 2338 / JCM 9278 / NBRC 100436 / V24Sta) (Thermoproteus neutrophilus).